The chain runs to 730 residues: Arginine decarboxylase 1B, chloroplastic (730 aa).

The transit peptide at 1–37 (MPALGCCVDAAVSPPPGYSFLWDSSLPAPEIFPSGVP) directs the protein to the chloroplast. Lys157 carries the N6-(pyridoxal phosphate)lysine modification. Pyridoxal 5'-phosphate-binding positions include Ser309, Gly346, and 395–398 (ESGR). 460-461 (YA) serves as a coordination point for substrate. The active-site Proton donor; shared with dimeric partner is the Cys548. Residue Asp549 coordinates substrate. Tyr590 lines the pyridoxal 5'-phosphate pocket.

Belongs to the Orn/Lys/Arg decarboxylase class-II family. SpeA subfamily. It depends on Mg(2+) as a cofactor. The cofactor is pyridoxal 5'-phosphate.

The protein localises to the plastid. The protein resides in the chloroplast. It catalyses the reaction L-arginine + H(+) = agmatine + CO2. It functions in the pathway alkaloid biosynthesis; nicotine biosynthesis. Its pathway is amine and polyamine biosynthesis; agmatine biosynthesis; agmatine from L-arginine: step 1/1. Functionally, involved in the biosynthesis of pyridine alkaloid natural products, leading mainly to the production of anabasine, anatabine, nicotine and nornicotine, effective deterrents against herbivores with antiparasitic and pesticide properties (neurotoxins); nornicotine serves as the precursor in the synthesis of the carcinogen compound N'-nitrosonornicotine (NNN). Required for the biosynthesis of putrescine. Catalyzes the first step of polyamine (PA) biosynthesis to produce putrescine from arginine. This Nicotiana tabacum (Common tobacco) protein is Arginine decarboxylase 1B, chloroplastic.